Here is a 948-residue protein sequence, read N- to C-terminus: UvrABC system protein A (948 aa).

33–40 (GLSGSGKS) is an ATP binding site. A C4-type zinc finger spans residues 252–279 (CPICGFSIGELEPRMFSFNSPFGACPTC). ABC transporter domains are found at residues 309–587 (WIPT…KKSL) and 607–935 (ASDR…KYLK). 639–646 (GVSGSGKS) is a binding site for ATP. The C4-type zinc-finger motif lies at 738 to 764 (CEACKGDGIIKIEMHFLPDVYVPCEVC).

It belongs to the ABC transporter superfamily. UvrA family. Forms a heterotetramer with UvrB during the search for lesions.

It localises to the cytoplasm. Its function is as follows. The UvrABC repair system catalyzes the recognition and processing of DNA lesions. UvrA is an ATPase and a DNA-binding protein. A damage recognition complex composed of 2 UvrA and 2 UvrB subunits scans DNA for abnormalities. When the presence of a lesion has been verified by UvrB, the UvrA molecules dissociate. The polypeptide is UvrABC system protein A (Staphylococcus aureus (strain MRSA252)).